A 290-amino-acid chain; its full sequence is 4-diphosphocytidyl-2-C-methyl-D-erythritol kinase (290 aa).

Lysine 20 is a catalytic residue. Residue proline 104–serine 114 participates in ATP binding. The active site involves aspartate 146.

It belongs to the GHMP kinase family. IspE subfamily.

It catalyses the reaction 4-CDP-2-C-methyl-D-erythritol + ATP = 4-CDP-2-C-methyl-D-erythritol 2-phosphate + ADP + H(+). It functions in the pathway isoprenoid biosynthesis; isopentenyl diphosphate biosynthesis via DXP pathway; isopentenyl diphosphate from 1-deoxy-D-xylulose 5-phosphate: step 3/6. Catalyzes the phosphorylation of the position 2 hydroxy group of 4-diphosphocytidyl-2C-methyl-D-erythritol. The sequence is that of 4-diphosphocytidyl-2-C-methyl-D-erythritol kinase from Shewanella frigidimarina (strain NCIMB 400).